The primary structure comprises 372 residues: Cytochrome b (372 aa).

4 helical membrane-spanning segments follow: residues 29 to 49, 73 to 95, 108 to 128, and 174 to 194; these read FGSMLGLIYSIQIISGLILSW, WFIRFIHSSGVSLFMFIMYLHIL, VWYSGILLLFICMGSAFLGYV, and FFSFHYLLSLFIMVFILIHLI. The heme b site is built by H79 and H93. H178 and H192 together coordinate heme b. H197 contributes to the a ubiquinone binding site. 4 consecutive transmembrane segments (helical) span residues 220 to 240, 284 to 301, 311 to 336, and 344 to 363; these read FSLKDTLVFVLVVFLYWFCIF, LGGVILMVMAILMLVFLG, MVKTLYWKLMLSSFLLVFIILTIMGG, and DILGNVNSVLYFFIYVIMLL.

Belongs to the cytochrome b family. As to quaternary structure, the main subunits of complex b-c1 are: cytochrome b, cytochrome c1 and the Rieske protein. Heme b serves as cofactor.

Its subcellular location is the mitochondrion inner membrane. In terms of biological role, component of the ubiquinol-cytochrome c reductase complex (complex III or cytochrome b-c1 complex) that is part of the mitochondrial respiratory chain. The b-c1 complex mediates electron transfer from ubiquinol to cytochrome c. Contributes to the generation of a proton gradient across the mitochondrial membrane that is then used for ATP synthesis. This Leptorhynchoides thecatus (Thorny-headed worm) protein is Cytochrome b (mt:Cyt-b).